A 497-amino-acid chain; its full sequence is Signal recognition particle subunit SRP54 2 (497 aa).

The tract at residues 1–295 is G-domain; that stretch reads MVLAQLGGSI…DVKPFVSRLL (295 aa). Residues 108 to 115, 190 to 194, and 248 to 251 contribute to the GTP site; these read GLQGSGKT, DTSGR, and TKLD. The M-domain stretch occupies residues 296-497; sequence GMGDLSGLMD…MLGGMGLGGD (202 aa).

Belongs to the GTP-binding SRP family. SRP54 subfamily. In terms of assembly, component of a signal recognition particle (SRP) complex that consists of a 7SL RNA molecule of 300 nucleotides and six protein subunits: SRP72, SRP68, SRP54, SRP19, SRP14 and SRP9.

The protein resides in the cytoplasm. The protein localises to the endoplasmic reticulum. The catalysed reaction is GTP + H2O = GDP + phosphate + H(+). In terms of biological role, component of the signal recognition particle (SRP) complex, a ribonucleoprotein complex that mediates the cotranslational targeting of secretory and membrane proteins to the endoplasmic reticulum (ER). As part of the SRP complex, associates with the SRP receptor (SR) component SRPRA to target secretory proteins to the endoplasmic reticulum membrane. Binds to the signal sequence of presecretory proteins when they emerge from the ribosomes. Displays basal GTPase activity, and stimulates reciprocal GTPase activation of the SR subunit SRPRA. Forms a guanosine 5'-triphosphate (GTP)-dependent complex with the SR subunit SRPRA. SR compaction and GTPase mediated rearrangement of SR drive SRP-mediated cotranslational protein translocation into the ER. Requires the presence of SRP9/SRP14 and/or SRP19 to stably interact with RNA. This is Signal recognition particle subunit SRP54 2 (SRP54-2) from Hordeum vulgare (Barley).